A 278-amino-acid chain; its full sequence is Putative transposase for insertion sequence element IS986/IS6110 (278 aa).

The region spanning 101–268 (GPPAPNRLWV…VPPVELEAAY (168 aa)) is the Integrase catalytic domain.

Involved in the transposition of the insertion sequence. The protein is Putative transposase for insertion sequence element IS986/IS6110 of Mycobacterium tuberculosis (strain CDC 1551 / Oshkosh).